Consider the following 294-residue polypeptide: Glyceraldehyde-3-phosphate dehydrogenase (294 aa).

Residues D19, R63, and T105 each contribute to the NAD(+) site. D-glyceraldehyde 3-phosphate-binding positions include 134 to 136 and T165; that span reads SCT. The active-site Nucleophile is C135. The disordered stretch occupies residues 169–188; sequence KTVDGPSHKDWRGGRGASQN. Residues 194–195 and R217 each bind D-glyceraldehyde 3-phosphate; that span reads TG.

This sequence belongs to the glyceraldehyde-3-phosphate dehydrogenase family. Homotetramer.

It localises to the cytoplasm. The catalysed reaction is D-glyceraldehyde 3-phosphate + phosphate + NAD(+) = (2R)-3-phospho-glyceroyl phosphate + NADH + H(+). It functions in the pathway carbohydrate degradation; glycolysis; pyruvate from D-glyceraldehyde 3-phosphate: step 1/5. Catalyzes the oxidative phosphorylation of glyceraldehyde 3-phosphate (G3P) to 1,3-bisphosphoglycerate (BPG) using the cofactor NAD. The first reaction step involves the formation of a hemiacetal intermediate between G3P and a cysteine residue, and this hemiacetal intermediate is then oxidized to a thioester, with concomitant reduction of NAD to NADH. The reduced NADH is then exchanged with the second NAD, and the thioester is attacked by a nucleophilic inorganic phosphate to produce BPG. The chain is Glyceraldehyde-3-phosphate dehydrogenase (gap) from Citrobacter freundii.